The chain runs to 1368 residues: DNA-directed RNA polymerase subunit beta (1368 aa).

It belongs to the RNA polymerase beta chain family. In terms of assembly, the RNAP catalytic core consists of 2 alpha, 1 beta, 1 beta' and 1 omega subunit. When a sigma factor is associated with the core the holoenzyme is formed, which can initiate transcription.

The enzyme catalyses RNA(n) + a ribonucleoside 5'-triphosphate = RNA(n+1) + diphosphate. Its function is as follows. DNA-dependent RNA polymerase catalyzes the transcription of DNA into RNA using the four ribonucleoside triphosphates as substrates. This Burkholderia pseudomallei (strain K96243) protein is DNA-directed RNA polymerase subunit beta.